Consider the following 542-residue polypeptide: Cytochrome P450 monooxygenase TRI1 (542 aa).

The chain crosses the membrane as a helical span at residues Leu37–Leu54. N-linked (GlcNAc...) asparagine glycans are attached at residues Asn167, Asn297, and Asn428. Position 469 (Cys469) interacts with heme.

Belongs to the cytochrome P450 family. The cofactor is heme.

Its subcellular location is the membrane. It participates in sesquiterpene biosynthesis; trichothecene biosynthesis. Its function is as follows. Cytochrome P450 monooxygenase; part of 2-gene cluster involved in trichothecene C-8 modification that mediates the biosynthesis of T2-toxin. The biosynthesis of trichothecenes begins with the cyclization of farnesyl diphosphate to trichodiene and is catalyzed by the trichodiene synthase TRI5. Trichodiene undergoes a series of oxygenations catalyzed by the cytochrome P450 monooxygenase TRI4. TRI4 controls the addition of four oxygens at C-2, C-3, C-11, and the C-12, C-13-epoxide to form the intermediate isotrichotriol. Isotrichotriol then undergoes a non-enzymatic isomerization and cyclization to form isotrichodermol. During this process, the oxygen at the C-2 position becomes the pyran ring oxygen and the hydroxyl group at C-11 is lost. More complex type A trichothecenes are built by modifying isotrichodermol through a series of paired hydroxylation and acetylation or acylation steps. Isotrichodermol is converted to isotrichodermin by the acetyltransferase TRI101. TRI101 encodes a C-3 transacetylase that acts as a self-protection or resistance factor during biosynthesis and that the presence of a free C-3 hydroxyl group is a key component of Fusarium trichothecene phytotoxicity. A second hydroxyl group is added to C-15 by the trichothecene C-15 hydroxylase TRI11, producing 15-decalonectrin, which is then acetylated by TRI3, producing calonectrin. A third hydroxyl group is added at C-4 by the cytochrome P450 monooxygenase TRI13, converting calonectrin to 3,15-diacetoxyspirpenol, which is subsequently acetylated by the acetyltransferase TRI7. A fourth hydroxyl group is added to C-8 by the cytochrome P450 monooxygenase TRI1, followed by the addition of an isovaleryl moiety by TRI16. Finally, the acetyl group is removed from the C-3 position by the trichothecene C-3 esterase TRI8 to produce T-2 toxin. The polypeptide is Cytochrome P450 monooxygenase TRI1 (Fusarium sporotrichioides).